The chain runs to 280 residues: MQLVIVTGLSGSGKSIVLKMLEDSGYYCIDNLPATLLPQASEHLSQGNHQRVAISIDTRSASLEALPGNIRKLKDEGIEVQVLFLEANVETLVKRYSETRRRHPLSSDTSTLAESISHERHMLEPLVDLGLRIDTSSLSANALRNWVKEFVTQKNGELILLFSSFGFKHGIPLDADYVFDVRCLPNPYYDPALRPQTGQDKPVCAFLEAHDSVQNMYDDIRGFIERWLPNFIADNRSYLTVAIGCTGGQHRSVYLAERLAAHFRRQEYRVLVRHRSLETN.

8–15 (GLSGSGKS) is a binding site for ATP. 57 to 60 (DTRS) lines the GTP pocket.

It belongs to the RapZ-like family.

Its function is as follows. Displays ATPase and GTPase activities. In Methylobacillus flagellatus (strain ATCC 51484 / DSM 6875 / VKM B-1610 / KT), this protein is Nucleotide-binding protein Mfla_0145.